Reading from the N-terminus, the 309-residue chain is Type II methyltransferase M.HindIII (309 aa).

Belongs to the N(4)/N(6)-methyltransferase family.

It carries out the reaction a 2'-deoxyadenosine in DNA + S-adenosyl-L-methionine = an N(6)-methyl-2'-deoxyadenosine in DNA + S-adenosyl-L-homocysteine + H(+). Functionally, a beta subtype methylase that recognizes the double-stranded sequence 5'-AAGCTT-3', methylates A-1 on both strands, and protects the DNA from cleavage by the HindIII endonuclease. This Haemophilus influenzae (strain ATCC 51907 / DSM 11121 / KW20 / Rd) protein is Type II methyltransferase M.HindIII.